The chain runs to 56 residues: uncharacterized protein (56 aa).

The next 2 membrane-spanning stretches (helical) occupy residues V6–G26 and V29–V49.

The protein resides in the cell membrane. This is an uncharacterized protein from Bacillus subtilis (strain 168).